The following is a 240-amino-acid chain: MQTKIKNKRVLVKFSGEALAGDNQFGIDIHVLDHIAKEIRSLVENDIEVGIVIGGGNIIRGVSAAQGGIIRRTSGDYMGMLATVINAVAMQEALEHIGLDTRVQSAIEIKEICESYIYRKAIRHLEKGRVVIFGAGTGNPFFTTDTAATLRAIEIGSDLIIKATKVDGIYDKDPNKFKDAKKLDTLSYNDALIGDIEVMDDTAISLAKDNKLPIVVCNMFKKGNLLQVIKHQQGVFSMVK.

Lys13–Gly16 lines the ATP pocket. Residue Gly55 participates in UMP binding. The ATP site is built by Gly56 and Arg60. Residues Asp76 and Thr137–Thr144 each bind UMP. ATP is bound by residues Thr164, Tyr170, and Asp173.

It belongs to the UMP kinase family. As to quaternary structure, homohexamer.

It is found in the cytoplasm. The enzyme catalyses UMP + ATP = UDP + ADP. Its pathway is pyrimidine metabolism; CTP biosynthesis via de novo pathway; UDP from UMP (UMPK route): step 1/1. With respect to regulation, inhibited by UTP. Its function is as follows. Catalyzes the reversible phosphorylation of UMP to UDP. The polypeptide is Uridylate kinase (Helicobacter acinonychis (strain Sheeba)).